A 306-amino-acid polypeptide reads, in one-letter code: S-methyl-5'-thioadenosine phosphorylase (306 aa).

Phosphate is bound by residues Thr-21, 63 to 64 (RH), and 96 to 97 (SA). Met-198 contributes to the substrate binding site. Ser-199 is a binding site for phosphate. Residue 222 to 224 (DYD) coordinates substrate.

It belongs to the PNP/MTAP phosphorylase family. MTAP subfamily. In terms of assembly, homotrimer.

The protein localises to the cytoplasm. It is found in the nucleus. The enzyme catalyses S-methyl-5'-thioadenosine + phosphate = 5-(methylsulfanyl)-alpha-D-ribose 1-phosphate + adenine. The protein operates within amino-acid biosynthesis; L-methionine biosynthesis via salvage pathway; S-methyl-5-thio-alpha-D-ribose 1-phosphate from S-methyl-5'-thioadenosine (phosphorylase route): step 1/1. Functionally, catalyzes the reversible phosphorylation of S-methyl-5'-thioadenosine (MTA) to adenine and 5-methylthioribose-1-phosphate. Involved in the breakdown of MTA, a major by-product of polyamine biosynthesis. Responsible for the first step in the methionine salvage pathway after MTA has been generated from S-adenosylmethionine. Has broad substrate specificity with 6-aminopurine nucleosides as preferred substrates. The protein is S-methyl-5'-thioadenosine phosphorylase of Sclerotinia sclerotiorum (strain ATCC 18683 / 1980 / Ss-1) (White mold).